Reading from the N-terminus, the 63-residue chain is Large ribosomal subunit protein bL28 (63 aa).

Belongs to the bacterial ribosomal protein bL28 family.

This is Large ribosomal subunit protein bL28 from Acidobacterium capsulatum (strain ATCC 51196 / DSM 11244 / BCRC 80197 / JCM 7670 / NBRC 15755 / NCIMB 13165 / 161).